The chain runs to 395 residues: Succinyl-diaminopimelate desuccinylase 2 (395 aa).

Histidine 79 is a Zn(2+) binding site. Aspartate 81 is a catalytic residue. A Zn(2+)-binding site is contributed by aspartate 112. Catalysis depends on glutamate 145, which acts as the Proton acceptor. The Zn(2+) site is built by glutamate 146, glutamate 174, and histidine 363.

This sequence belongs to the peptidase M20A family. DapE subfamily. As to quaternary structure, homodimer. It depends on Zn(2+) as a cofactor. Co(2+) is required as a cofactor.

It catalyses the reaction N-succinyl-(2S,6S)-2,6-diaminopimelate + H2O = (2S,6S)-2,6-diaminopimelate + succinate. It participates in amino-acid biosynthesis; L-lysine biosynthesis via DAP pathway; LL-2,6-diaminopimelate from (S)-tetrahydrodipicolinate (succinylase route): step 3/3. Catalyzes the hydrolysis of N-succinyl-L,L-diaminopimelic acid (SDAP), forming succinate and LL-2,6-diaminopimelate (DAP), an intermediate involved in the bacterial biosynthesis of lysine and meso-diaminopimelic acid, an essential component of bacterial cell walls. The polypeptide is Succinyl-diaminopimelate desuccinylase 2 (Ruegeria sp. (strain TM1040) (Silicibacter sp.)).